Reading from the N-terminus, the 275-residue chain is Uroporphyrinogen-III synthase (275 aa).

This sequence belongs to the uroporphyrinogen-III synthase family.

It carries out the reaction hydroxymethylbilane = uroporphyrinogen III + H2O. The protein operates within porphyrin-containing compound metabolism; protoporphyrin-IX biosynthesis; coproporphyrinogen-III from 5-aminolevulinate: step 3/4. Catalyzes cyclization of the linear tetrapyrrole, hydroxymethylbilane, to the macrocyclic uroporphyrinogen III, the fourth step in the heme biosynthetic pathway. This is Uroporphyrinogen-III synthase from Saccharomyces cerevisiae (strain ATCC 204508 / S288c) (Baker's yeast).